We begin with the raw amino-acid sequence, 466 residues long: Cysteine--tRNA ligase (466 aa).

Zn(2+) is bound at residue C29. Positions 31–41 (ATVQAAPHIGH) match the 'HIGH' region motif. Zn(2+)-binding residues include C208, H233, and E237. The 'KMSKS' region motif lies at 264 to 268 (KMSKS). K267 provides a ligand contact to ATP.

Belongs to the class-I aminoacyl-tRNA synthetase family. Monomer. Zn(2+) serves as cofactor.

The protein resides in the cytoplasm. The enzyme catalyses tRNA(Cys) + L-cysteine + ATP = L-cysteinyl-tRNA(Cys) + AMP + diphosphate. The chain is Cysteine--tRNA ligase from Streptomyces avermitilis (strain ATCC 31267 / DSM 46492 / JCM 5070 / NBRC 14893 / NCIMB 12804 / NRRL 8165 / MA-4680).